A 101-amino-acid polypeptide reads, in one-letter code: Large ribosomal subunit protein P1 (101 aa).

Residues 61-72 show a composition bias toward low complexity; the sequence is AAPAAAAAPAAA. The disordered stretch occupies residues 61–101; sequence AAPAAAAAPAAAEEAEEEAEEEEEEEEAEEEAAAGLGALFG. A compositionally biased stretch (acidic residues) spans 73–92; it reads EEAEEEAEEEEEEEEAEEEA.

It belongs to the eukaryotic ribosomal protein P1/P2 family. In terms of assembly, part of the 50S ribosomal subunit. Homodimer, it forms part of the ribosomal stalk which helps the ribosome interact with GTP-bound translation factors. Forms a heptameric uL10/P0(P1)2(P1)2(P1)2 complex, where uL10/P0 forms an elongated spine to which the P1 dimers bind in a sequential fashion.

Forms part of the ribosomal stalk, playing a central role in the interaction of the ribosome with GTP-bound translation factors. The chain is Large ribosomal subunit protein P1 from Methanothermobacter thermautotrophicus (strain ATCC 29096 / DSM 1053 / JCM 10044 / NBRC 100330 / Delta H) (Methanobacterium thermoautotrophicum).